Consider the following 240-residue polypeptide: tRNA (guanine-N(7)-)-methyltransferase (240 aa).

Residues 1–20 (MTESHDTPITSDGEARPHRR) form a disordered region. Glutamate 70, glutamate 95, aspartate 122, and aspartate 145 together coordinate S-adenosyl-L-methionine. The active site involves aspartate 145. Substrate-binding positions include lysine 149, aspartate 181, and 218–221 (TKFE).

This sequence belongs to the class I-like SAM-binding methyltransferase superfamily. TrmB family.

It catalyses the reaction guanosine(46) in tRNA + S-adenosyl-L-methionine = N(7)-methylguanosine(46) in tRNA + S-adenosyl-L-homocysteine. The protein operates within tRNA modification; N(7)-methylguanine-tRNA biosynthesis. Catalyzes the formation of N(7)-methylguanine at position 46 (m7G46) in tRNA. This Pseudomonas putida (strain ATCC 700007 / DSM 6899 / JCM 31910 / BCRC 17059 / LMG 24140 / F1) protein is tRNA (guanine-N(7)-)-methyltransferase.